The following is a 306-amino-acid chain: Probable histidinol-phosphatase (306 aa).

It belongs to the PHP hydrolase family. HisK subfamily.

The enzyme catalyses L-histidinol phosphate + H2O = L-histidinol + phosphate. Its pathway is amino-acid biosynthesis; L-histidine biosynthesis; L-histidine from 5-phospho-alpha-D-ribose 1-diphosphate: step 8/9. The polypeptide is Probable histidinol-phosphatase (Schizosaccharomyces pombe (strain 972 / ATCC 24843) (Fission yeast)).